We begin with the raw amino-acid sequence, 1346 residues long: G-protein coupled receptor-associated sorting protein 1 (1346 aa).

3 disordered regions span residues 1–101, 144–177, and 192–258; these read MTGA…FRGE, TESI…RPRP, and ADKS…SAKT. Residues 21–36 show a composition bias toward low complexity; sequence ENANAAEVEPEVPLVV. A compositionally biased stretch (basic residues) spans 211–226; that stretch reads FRPRKSMKSNTRFRHM. Residue S295 is modified to Phosphoserine. 2 disordered regions span residues 311 to 399 and 461 to 485; these read EEAK…RPEE and VSSF…SKSM. Residues 316–333 are compositionally biased toward basic residues; the sequence is RSKPRARKGVNMRARHQA. 2 stretches are compositionally biased toward basic and acidic residues: residues 347-361 and 370-399; these read DKNK…EEKA and KKEP…RPEE. The span at 461 to 484 shows a compositional bias: polar residues; sequence VSSFCLGSGKKTSMESGPKATSKS. A phosphoserine mark is found at S619 and S626. T860 is subject to Phosphothreonine. S862 is subject to Phosphoserine. Positions 984 to 1004 are disordered; sequence ACEPESSTEHEPDPSRRPQSW. The segment covering 990-1003 has biased composition (basic and acidic residues); sequence STEHEPDPSRRPQS.

Belongs to the GPRASP family. Interacts with cytoplasmic tails of a variety of G-protein coupled receptors such as delta opioid receptor/OPRD1, beta-2 adrenergic receptor/ADRB2 and D4 dopamine receptor/DRD4. Interacts with BECN2; the interaction is direct and with D2 dopamine receptor/DRD2. Interacts with PER1. In terms of tissue distribution, expressed in the brain.

The protein localises to the cytoplasm. Modulates lysosomal sorting and functional down-regulation of a variety of G-protein coupled receptors. Targets receptors for degradation in lysosomes via its interaction with BECN2. The sequence is that of G-protein coupled receptor-associated sorting protein 1 (Gprasp1) from Rattus norvegicus (Rat).